The sequence spans 288 residues: NAD kinase (288 aa).

Residue Asp70 is the Proton acceptor of the active site. Residues 70–71 (DG), 144–145 (ND), Arg155, Lys172, Asp174, 185–190 (TGYSLS), and Gln245 each bind NAD(+).

It belongs to the NAD kinase family. A divalent metal cation is required as a cofactor.

Its subcellular location is the cytoplasm. The catalysed reaction is NAD(+) + ATP = ADP + NADP(+) + H(+). In terms of biological role, involved in the regulation of the intracellular balance of NAD and NADP, and is a key enzyme in the biosynthesis of NADP. Catalyzes specifically the phosphorylation on 2'-hydroxyl of the adenosine moiety of NAD to yield NADP. The polypeptide is NAD kinase (Geobacter sp. (strain M21)).